We begin with the raw amino-acid sequence, 106 residues long: Iron-sulfur cluster assembly protein CyaY (106 aa).

Belongs to the frataxin family.

Functionally, involved in iron-sulfur (Fe-S) cluster assembly. May act as a regulator of Fe-S biogenesis. This chain is Iron-sulfur cluster assembly protein CyaY, found in Pectobacterium atrosepticum (strain SCRI 1043 / ATCC BAA-672) (Erwinia carotovora subsp. atroseptica).